The sequence spans 677 residues: Pannexin-2 (677 aa).

At 11-53 (MATALLAGEKLRELILPGSQDDKAGALAALLLQLKLELPFDRV) the chain is on the cytoplasmic side. Residues 54–74 (VTIGTVLVPILLVTLVFTKNF) form a helical membrane-spanning segment. Residues 75 to 125 (AEEPIYCYTPHNFTRDQALYARGYCWTELRDALPGVDASLWPSLFEHKFLP) are Extracellular-facing. Asn-86 carries N-linked (GlcNAc...) asparagine glycosylation. A helical transmembrane segment spans residues 126–146 (YALLAFAAIMYVPALGWEFLA). Residues 147 to 230 (STRLTSELNF…NFLAKLYLAR (84 aa)) lie on the Cytoplasmic side of the membrane. The chain crosses the membrane as a helical span at residues 231 to 251 (HVLILLLSVVPISYLCTYYAT). The Extracellular portion of the chain corresponds to 252-295 (QKQNEFTCALGASPDGPVGSAGPTVRVSCKLPSVQLQRIIAGVD). Residues 296 to 316 (IVLLCFMNLIILVNLIHLFIF) traverse the membrane as a helical segment. Topologically, residues 317–617 (RKSNFIFDKL…LGKADPLTIL (301 aa)) are cytoplasmic. Residues 394-408 (TTPTVRDSGIQTVDP) are compositionally biased toward polar residues. 2 disordered regions span residues 394–425 (TTPT…PVVK) and 485–512 (AHHY…HTRH). A phosphoserine mark is found at Ser-593 and Ser-604.

It belongs to the pannexin family. In terms of assembly, homoheptameric. In terms of processing, S-palmitoylated in neural stem and progenitor cells. Cleaved by CASP3 and CASP7 during apoptosis. Cleavage has no effect on it function. As to expression, expression is enriched in central nervous system. Expressed in suprabasal layers of skin epidermis. In terms of tissue distribution, more aboundantly expressed in skin.

It localises to the cell membrane. It is found in the golgi apparatus membrane. The protein resides in the endoplasmic reticulum membrane. It catalyses the reaction ATP(in) = ATP(out). The enzyme catalyses chloride(in) = chloride(out). It carries out the reaction iodide(out) = iodide(in). The catalysed reaction is Na(+)(in) = Na(+)(out). It catalyses the reaction D-gluconate(in) = D-gluconate(out). Ion channel with a slight anion preference. Also able to release ATP. Plays a role in regulating neurogenesis and apoptosis in keratinocytes. This is Pannexin-2 (Panx2) from Mus musculus (Mouse).